Consider the following 368-residue polypeptide: Peptide chain release factor 2 (368 aa).

An N5-methylglutamine modification is found at Gln249.

This sequence belongs to the prokaryotic/mitochondrial release factor family. Post-translationally, methylated by PrmC. Methylation increases the termination efficiency of RF2.

It is found in the cytoplasm. Functionally, peptide chain release factor 2 directs the termination of translation in response to the peptide chain termination codons UGA and UAA. This chain is Peptide chain release factor 2, found in Rhodococcus erythropolis (strain PR4 / NBRC 100887).